A 698-amino-acid polypeptide reads, in one-letter code: 4-hydroxybutyrate--CoA ligase [ADP-forming] (698 aa).

Residues 491 to 544 (QEVLKAYGLPLPKSTLAKNEAEAVKAAKKIGYPVVMKIASPQIIHKSDAGGVKV) form the ATP-grasp domain. 517-544 (AKKIGYPVVMKIASPQIIHKSDAGGVKV) contributes to the ATP binding site.

It in the N-terminal section; belongs to the acetate CoA ligase alpha subunit family. The protein in the C-terminal section; belongs to the acetate CoA ligase beta subunit family. The cofactor is Mg(2+). Requires Mn(2+) as cofactor.

It catalyses the reaction 4-hydroxybutanoate + ATP + CoA = 4-hydroxybutanoyl-CoA + ADP + phosphate. In terms of biological role, involved in thaumarchaeal hydroxypropionate/hydroxybutyrate (HP/HB) cycle, a modified version of the autotrophic HP/HB cycle of Crenarchaeota. Catalyzes the formation of 4-hydroxybutyryl-CoA, ADP and phosphate from 4-hydroxybutyrate, coenzyme A (CoA) and ATP. Can also use acetate, propionate and butyrate, with poor catalytic efficiency. This chain is 4-hydroxybutyrate--CoA ligase [ADP-forming], found in Nitrosopumilus maritimus (strain SCM1).